A 354-amino-acid chain; its full sequence is tRNA-specific 2-thiouridylase MnmA (354 aa).

ATP contacts are provided by residues 6-13 (LLSGGVDS) and Leu-33. The active-site Nucleophile is Cys-100. Cys-100 and Cys-195 are oxidised to a cystine. Gly-123 serves as a coordination point for ATP. Residues 145–147 (KDQ) form an interaction with tRNA region. The active-site Cysteine persulfide intermediate is Cys-195.

The protein belongs to the MnmA/TRMU family.

It is found in the cytoplasm. The enzyme catalyses S-sulfanyl-L-cysteinyl-[protein] + uridine(34) in tRNA + AH2 + ATP = 2-thiouridine(34) in tRNA + L-cysteinyl-[protein] + A + AMP + diphosphate + H(+). Its function is as follows. Catalyzes the 2-thiolation of uridine at the wobble position (U34) of tRNA, leading to the formation of s(2)U34. The chain is tRNA-specific 2-thiouridylase MnmA from Borrelia turicatae (strain 91E135).